Consider the following 192-residue polypeptide: UPF0149 protein Spro_3920 (192 aa).

This sequence belongs to the UPF0149 family.

The protein is UPF0149 protein Spro_3920 of Serratia proteamaculans (strain 568).